The following is a 297-amino-acid chain: N-acetylneuraminate lyase (297 aa).

The aceneuramate site is built by Ser-47 and Thr-48. The Proton donor role is filled by Tyr-137. The active-site Schiff-base intermediate with substrate is the Lys-165. Aceneuramate contacts are provided by Thr-167, Gly-189, Asp-191, Glu-192, and Ser-208.

Belongs to the DapA family. NanA subfamily. Homotetramer.

It localises to the cytoplasm. It catalyses the reaction aceneuramate = aldehydo-N-acetyl-D-mannosamine + pyruvate. It participates in amino-sugar metabolism; N-acetylneuraminate degradation; D-fructose 6-phosphate from N-acetylneuraminate: step 1/5. In terms of biological role, catalyzes the reversible aldol cleavage of N-acetylneuraminic acid (sialic acid; Neu5Ac) to form pyruvate and N-acetylmannosamine (ManNAc) via a Schiff base intermediate. The chain is N-acetylneuraminate lyase from Escherichia coli (strain SE11).